A 652-amino-acid chain; its full sequence is Complement component C1q receptor (652 aa).

The first 21 residues, 1 to 21 (MATSMGLLLLLLLLLTQPGAG), serve as a signal peptide directing secretion. The Extracellular portion of the chain corresponds to 24-580 (ADTEAVVCVG…QNNDGTDGQK (557 aa)). One can recognise a C-type lectin domain in the interval 32-174 (VGTACYTAHS…CGSPGSPGSN (143 aa)). 16 cysteine pairs are disulfide-bonded: C141–C165, C264–C275, C271–C285, C287–C300, C306–C317, C311–C328, C330–C343, C349–C358, C354–C367, C369–C383, C389–C400, C396–C409, C411–C425, C431–C443, C439–C452, and C454–C467. EGF-like domains follow at residues 260–301 (PKYG…VTCA) and 302–344 (SRNP…LDCV). N-linked (GlcNAc...) asparagine glycosylation is present at N325. The region spanning 345-384 (DVDECQDSPCAQECVNTPGGFRCECWVGYEPGGPGEGACQ) is the EGF-like 3; calcium-binding domain. The EGF-like 4; calcium-binding domain occupies 385–426 (DVDECALGRSPCAQGCTNTDGSFHCSCEEGYVLAGEDGTQCQ). The region spanning 427–468 (DVDECVGPGGPLCDSLCFNTQGSFHCGCLPGWVLAPNGVSCT) is the EGF-like 5; calcium-binding domain. 2 disordered regions span residues 472–546 (VSLG…VWRE) and 553–572 (TAAS…ATQN). Positions 512–526 (ATPTTSRPSLSSDAP) are enriched in polar residues. Residues 581 to 601 (LLLFYILGTVVAILLLLALAL) form a helical membrane-spanning segment. At 602–652 (GLLVYRKRRAKREEKKEKKPQNAADSYSWVPERAESRAMENQYSPTPGTDC) the chain is on the cytoplasmic side. The disordered stretch occupies residues 611 to 652 (AKREEKKEKKPQNAADSYSWVPERAESRAMENQYSPTPGTDC). Positions 612 to 621 (KREEKKEKKP) are enriched in basic and acidic residues. S627 carries the phosphoserine modification. Phosphotyrosine is present on residues Y628 and Y644. A compositionally biased stretch (polar residues) spans 640 to 652 (MENQYSPTPGTDC).

In terms of assembly, homodimer. Interacts with C1QBP; the association may represent a cell surface C1q receptor. Interacts with surfactant protein A/SFTPA1. Interacts with multimerin-2/MMRN2. Interacts with DAG1; this interaction plays an important role in endothelial cell migration. Interacts with CBL. Interacts with IGFBP7. Interacts with VEGFR2. As to quaternary structure, (Microbial infection) Interacts with hepatitis virus C/HCV core protein. Post-translationally, N- and O-glycosylated. Phosphorylated on Tyr-628 and Tyr-644 by SRC; these phosphorylations promote endothelial cell adhesion and migration. As to expression, highly expressed in endothelial cells, platelets, cells of myeloid origin, such as monocytes and neutrophils. Not expressed in cells of lymphoid origin.

The protein localises to the cell membrane. Its function is as follows. Cell surface receptor that plays a role in various physiological processes including inflammation, phagocytosis, and cell adhesion. Plays a role in phagocytosis and enhances the uptake of apoptotic cells and immune complexes by acting as a receptor for defense collagens including surfactant protein A/SFTPA1, C1q, and mannose-binding lectin (MBL2). Plays a role in the regulation of endothelial cell function and adhesion by activating angiogenesis. Mechanistically, exerts its angiogenic function by associating with beta-dystroglycan, leading to SRC-dependent phosphorylation and subsequent recruitment of CBL. In turn, CBL provides a docking site for downstream signaling components, such as CRKL to enhance cell migration. Participates in angiogenesis also by acting as a receptor for the ECM pan-endothelial glycoprotein multimerin-2/MMRN2 and IGFBP7 ligands. Both ligands play a non-redundant role in CD93-mediated endothelial cell function. Acts as a key regulator of endothelial barrier function through modulating VEGFR2 function. This Homo sapiens (Human) protein is Complement component C1q receptor (CD93).